The primary structure comprises 215 residues: 3,4-dihydroxy-2-butanone 4-phosphate synthase (215 aa).

D-ribulose 5-phosphate is bound by residues 37 to 38, Asp42, 150 to 154, and Glu175; these read RE and RRGHT. Residue Glu38 participates in Mg(2+) binding. His153 is a Mg(2+) binding site.

This sequence belongs to the DHBP synthase family. As to quaternary structure, homodimer. Requires Mg(2+) as cofactor. Mn(2+) is required as a cofactor.

It carries out the reaction D-ribulose 5-phosphate = (2S)-2-hydroxy-3-oxobutyl phosphate + formate + H(+). It functions in the pathway cofactor biosynthesis; riboflavin biosynthesis; 2-hydroxy-3-oxobutyl phosphate from D-ribulose 5-phosphate: step 1/1. Functionally, catalyzes the conversion of D-ribulose 5-phosphate to formate and 3,4-dihydroxy-2-butanone 4-phosphate. The protein is 3,4-dihydroxy-2-butanone 4-phosphate synthase of Desulfatibacillum aliphaticivorans.